The following is a 403-amino-acid chain: Formate-dependent phosphoribosylglycinamide formyltransferase (403 aa).

N(1)-(5-phospho-beta-D-ribosyl)glycinamide is bound by residues 27-28 (EL) and E87. Residues R120, K161, 166–171 (SSGKGQ), 201–204 (EGFV), and E209 contribute to the ATP site. Residues 125 to 319 (RLAAEELGLP…EFELHARAIL (195 aa)) form the ATP-grasp domain. E278 and E290 together coordinate Mg(2+). N(1)-(5-phospho-beta-D-ribosyl)glycinamide contacts are provided by residues D297, K366, and 373–374 (RR). A disordered region spans residues 382-403 (GPDVETARSRAREAASRVEPVA). The segment covering 386-397 (ETARSRAREAAS) has biased composition (basic and acidic residues).

This sequence belongs to the PurK/PurT family. As to quaternary structure, homodimer.

The enzyme catalyses N(1)-(5-phospho-beta-D-ribosyl)glycinamide + formate + ATP = N(2)-formyl-N(1)-(5-phospho-beta-D-ribosyl)glycinamide + ADP + phosphate + H(+). Its pathway is purine metabolism; IMP biosynthesis via de novo pathway; N(2)-formyl-N(1)-(5-phospho-D-ribosyl)glycinamide from N(1)-(5-phospho-D-ribosyl)glycinamide (formate route): step 1/1. Functionally, involved in the de novo purine biosynthesis. Catalyzes the transfer of formate to 5-phospho-ribosyl-glycinamide (GAR), producing 5-phospho-ribosyl-N-formylglycinamide (FGAR). Formate is provided by PurU via hydrolysis of 10-formyl-tetrahydrofolate. The polypeptide is Formate-dependent phosphoribosylglycinamide formyltransferase (Rhodococcus jostii (strain RHA1)).